The chain runs to 717 residues: MFIWTKAPARGLGKASKILPKRDDTQKVFETTHHKQFHTATTSVRRSSSSAKERQRAERQQLTRLLKESPGKRDARNFLKQFDVPKKSKASITAKAKELVSENIHNDLASLRTGVNLGDLYKPTVFTREPLPEESYDAEKDEPVHLALVKLRQPQKLTDRTLGDIALTLSQMARLGLSTAVVLDCDEDTSTHSIEVKPEYGNMVREQALRLVAALEDYNEPGSLLVEDVLGYSPLDNDMPSTNQVRGGVEVQHTYLLFPPIDDGVIPVIAPFAYDENLKKVRVQADDVLLALVREFAGLGHSNGMESPRGSLHKTKRVVERPLLDRIIILDPLGGIPSENRADGAHVFVNLEAEYRDIKKELQQLSSKTSNGAGSPTSLSTGNPLSKFVEQEVVSLPGVQSENLASSAPVRHLKNLDVLERGLKLLPPSSSGLILTPMEAATKAIPDDARTTPSKNPLLHNLLTDKPMTSSSLPTSPTSRFLGSAAPNPATFLKKGIPLTMIPDPRVHGPWQPPSASNPSIELADDPRINFPKLVDLIDDSFQRKLHPKNYLDRIHGRVAGIIIAGDYEGGAICTWETPKSLQGATPPSVLTPDSPYWIPYLDKFAVLTSSQGSGGVSDIVWAALTRTCFPDGVVWRSRTSNPVNKWYQERSMGMWKLPGDQWTMFWTTEGIVGGWEQGKWGDVDDAKKRDMKRWDACIDVCSGIEPSWADGIQRDD.

A mitochondrion-targeting transit peptide spans 1–23 (MFIWTKAPARGLGKASKILPKRD). The segment at 35-70 (KQFHTATTSVRRSSSSAKERQRAERQQLTRLLKESP) is disordered. Residues 39-50 (TATTSVRRSSSS) are compositionally biased toward low complexity. Positions 51 to 70 (AKERQRAERQQLTRLLKESP) are enriched in basic and acidic residues. The 174-residue stretch at 518–691 (NPSIELADDP…GDVDDAKKRD (174 aa)) folds into the N-acetyltransferase domain.

The protein belongs to the acetyltransferase family.

It is found in the mitochondrion. It carries out the reaction L-glutamate + acetyl-CoA = N-acetyl-L-glutamate + CoA + H(+). It participates in amino-acid biosynthesis; L-arginine biosynthesis; N(2)-acetyl-L-ornithine from L-glutamate: step 1/4. In terms of biological role, N-acetylglutamate synthase involved in arginine biosynthesis. The chain is Amino-acid acetyltransferase, mitochondrial (arg2) from Pyrenophora tritici-repentis (strain Pt-1C-BFP) (Wheat tan spot fungus).